The chain runs to 588 residues: MTAAPASPQQMRDRLLQAIDSQSNIRNMVAVLEVISSLERYPITKEALEETRLGKLINDVRKKTKNEELAKRAKRLLRSWQKLIEPVHQNEVALRALAGAAGSANGGAHNCRPEMGVAGAPKSIHDLKNRNDIQRLPGQRLDRLGSRKRRGDQRDLGHPGPPHKVSKGSPDPLVPNASPLPTNGISGSPESLPSPLDGSGHLGPDGSRLEPSDNEKHSTKIPVNAVRPRPSSPGLGKPPVPCLQTKAAQLQQLDRADESPGPPYPRGSSRCSFSPRNSRHEGSFSRHRSSYIPKGQVSSPSPWPQPPDNTQVPSPLPLAQPPTPPVRRQELLPNAESPVHWPEQSEGHPRLTGPACRAGFSPDSSKADSDATSSGGSDSKKKKRYRPRDYTVNLDGQVAEAGVKPVRLKERKLTFDPMTRQIRPLTQKEPVRADSPVPTEQLPRTELEQQEVKASLQSPFEQTNWKELSRNEIIQSYLSRQSSLLSSSGAQTPGAHHFMAEYLKQEESSRQGARQPHVLLPLPTPTDLPGLTREVTQDDLDRIQAQQWPGVNGCEDTQGNWYDWTQCISLDPHGDDGRLNILPYVCLD.

Residues 10–87 (QMRDRLLQAI…RSWQKLIEPV (78 aa)) enclose the TFIIS N-terminal domain. Disordered regions lie at residues 112 to 393 (RPEM…YTVN) and 412 to 441 (KLTF…PTEQ). A compositionally biased stretch (basic and acidic residues) spans 123–133 (SIHDLKNRNDI). Positions 179–191 (PLPTNGISGSPES) are enriched in polar residues. Basic and acidic residues predominate over residues 207-218 (SRLEPSDNEKHS). Positions 314–325 (SPLPLAQPPTPP) are enriched in pro residues. Phosphoserine occurs at positions 435 and 458.

Belongs to the Mediator complex subunit 26 family. In terms of assembly, component of the Mediator complex, which is composed of MED1, MED4, MED6, MED7, MED8, MED9, MED10, MED11, MED12, MED13, MED13L, MED14, MED15, MED16, MED17, MED18, MED19, MED20, MED21, MED22, MED23, MED24, MED25, MED26, MED27, MED29, MED30, MED31, CCNC, CDK8 and CDC2L6/CDK11. The MED12, MED13, CCNC and CDK8 subunits form a distinct module termed the CDK8 module. Mediator containing the CDK8 module is less active than Mediator lacking this module in supporting transcriptional activation. Individual preparations of the Mediator complex lacking one or more distinct subunits have been variously termed ARC, CRSP, DRIP, PC2, SMCC and TRAP. Interacts with CEBPB (when not methylated).

Its subcellular location is the nucleus. In terms of biological role, component of the Mediator complex, a coactivator involved in the regulated transcription of nearly all RNA polymerase II-dependent genes. Mediator functions as a bridge to convey information from gene-specific regulatory proteins to the basal RNA polymerase II transcription machinery. Mediator is recruited to promoters by direct interactions with regulatory proteins and serves as a scaffold for the assembly of a functional pre-initiation complex with RNA polymerase II and the general transcription factors. The chain is Mediator of RNA polymerase II transcription subunit 26 (Med26) from Mus musculus (Mouse).